The sequence spans 291 residues: Hydroxysteroid 11-beta-dehydrogenase 1-like protein A (291 aa).

Positions 1-18 (MAGVKLLLLSLCVGYTAY) are cleaved as a signal peptide. Residues 40–66 (GSSTGIGEQIAYEFARMGAHIMVTARR), 91–92 (DM), and 118–120 (NHI) each bind NADP(+). Residue S170 participates in substrate binding. Y183 acts as the Proton acceptor in catalysis. Residues 183–187 (YCASK) and 216–222 (GYIDTEN) contribute to the NADP(+) site.

This sequence belongs to the short-chain dehydrogenases/reductases (SDR) family.

Its subcellular location is the secreted. It catalyses the reaction cortisone + NADPH + H(+) = cortisol + NADP(+). In terms of biological role, unidirectional NADP(+)-dependent cortisol dehydrogenase (in vitro). In Xenopus laevis (African clawed frog), this protein is Hydroxysteroid 11-beta-dehydrogenase 1-like protein A (hsd11b1l-a).